The sequence spans 387 residues: Chaperone protein DnaJ (387 aa).

One can recognise a J domain in the interval 5–70; that stretch reads DYYEILEVSA…QKRQAYDQFG (66 aa). The CR-type zinc-finger motif lies at 130-208; that stretch reads GTTVDVRIPT…CRGEGYKHSS (79 aa). Zn(2+) contacts are provided by cysteine 143, cysteine 146, cysteine 160, cysteine 163, cysteine 182, cysteine 185, cysteine 196, and cysteine 199. CXXCXGXG motif repeat units follow at residues 143-150, 160-167, 182-189, and 196-203; these read CESCDGSG, CPTCQGIG, CPNCHGTG, and CKTCRGEG.

It belongs to the DnaJ family. In terms of assembly, homodimer. The cofactor is Zn(2+).

It localises to the cytoplasm. Functionally, participates actively in the response to hyperosmotic and heat shock by preventing the aggregation of stress-denatured proteins and by disaggregating proteins, also in an autonomous, DnaK-independent fashion. Unfolded proteins bind initially to DnaJ; upon interaction with the DnaJ-bound protein, DnaK hydrolyzes its bound ATP, resulting in the formation of a stable complex. GrpE releases ADP from DnaK; ATP binding to DnaK triggers the release of the substrate protein, thus completing the reaction cycle. Several rounds of ATP-dependent interactions between DnaJ, DnaK and GrpE are required for fully efficient folding. Also involved, together with DnaK and GrpE, in the DNA replication of plasmids through activation of initiation proteins. The chain is Chaperone protein DnaJ from Hydrogenovibrio crunogenus (strain DSM 25203 / XCL-2) (Thiomicrospira crunogena).